A 101-amino-acid chain; its full sequence is uncharacterized protein (101 aa).

The protein localises to the mitochondrion. This is an uncharacterized protein from Arabidopsis thaliana (Mouse-ear cress).